A 362-amino-acid chain; its full sequence is UDP-N-acetylglucosamine--N-acetylmuramyl-(pentapeptide) pyrophosphoryl-undecaprenol N-acetylglucosamine transferase (362 aa).

Residues 11–13 (TGG), N124, R163, S191, I246, and Q291 each bind UDP-N-acetyl-alpha-D-glucosamine.

The protein belongs to the glycosyltransferase 28 family. MurG subfamily.

It localises to the cell inner membrane. It carries out the reaction di-trans,octa-cis-undecaprenyl diphospho-N-acetyl-alpha-D-muramoyl-L-alanyl-D-glutamyl-meso-2,6-diaminopimeloyl-D-alanyl-D-alanine + UDP-N-acetyl-alpha-D-glucosamine = di-trans,octa-cis-undecaprenyl diphospho-[N-acetyl-alpha-D-glucosaminyl-(1-&gt;4)]-N-acetyl-alpha-D-muramoyl-L-alanyl-D-glutamyl-meso-2,6-diaminopimeloyl-D-alanyl-D-alanine + UDP + H(+). The protein operates within cell wall biogenesis; peptidoglycan biosynthesis. Cell wall formation. Catalyzes the transfer of a GlcNAc subunit on undecaprenyl-pyrophosphoryl-MurNAc-pentapeptide (lipid intermediate I) to form undecaprenyl-pyrophosphoryl-MurNAc-(pentapeptide)GlcNAc (lipid intermediate II). This is UDP-N-acetylglucosamine--N-acetylmuramyl-(pentapeptide) pyrophosphoryl-undecaprenol N-acetylglucosamine transferase from Idiomarina loihiensis (strain ATCC BAA-735 / DSM 15497 / L2-TR).